The primary structure comprises 551 residues: Oleuropein beta-glucosidase (551 aa).

Residues 1 to 27 (MDIQSNVLTITSGSTPTDTSSNGQAAK) are compositionally biased toward polar residues. The interval 1-33 (MDIQSNVLTITSGSTPTDTSSNGQAAKSTKERI) is disordered. A beta-D-glucoside-binding positions include glutamine 52, histidine 156, 201 to 202 (NE), tyrosine 363, glutamate 433, tryptophan 482, 489 to 490 (EW), and phenylalanine 498. Residue glutamate 202 is the Proton donor of the active site. Glutamate 433 serves as the catalytic Nucleophile. Residues 502–551 (YVDYANGRYTRLPKRSAVWWRNFLTKPTAVPLKNEPEKSEDRRKRLRGST) are required for the homomultimerization. Residues 532–551 (PLKNEPEKSEDRRKRLRGST) form a disordered region. Residues 535-544 (NEPEKSEDRR) show a composition bias toward basic and acidic residues. Positions 542-550 (DRRKRLRGS) match the Nuclear localization signal motif.

Belongs to the glycosyl hydrolase 1 family. As to quaternary structure, homomultimer. Native form of the enzyme requires at least an octamer conformation. As to expression, expressed in expanding leaves and in young drupes, mostly in the developing seed coat tissues, the perisperm and the mesocarp. Also detected in shoot and root meristems, flower buds, developing ovaries and tapetal cells of the anther. Not detected in embryos or endosperm, or in leaf trichomes.

It localises to the nucleus. It catalyses the reaction oleuropein + H2O = oleuropein aglycone + D-glucose. In terms of biological role, major beta-glucosidase activating oleuropein into a potent protein cross-linking agent. No activity with rutin, luteolin or p-nitrophenyl-beta-glucopyranoside as substrates. This chain is Oleuropein beta-glucosidase, found in Olea europaea (Common olive).